We begin with the raw amino-acid sequence, 123 residues long: Protein Wnt-3a (123 aa).

A lipid anchor (O-palmitoleoyl serine) is attached at Ser-1. An intrachain disulfide couples Cys-89 to Cys-104. Asn-90 carries N-linked (GlcNAc...) asparagine glycosylation.

This sequence belongs to the Wnt family. In terms of processing, disulfide bonds have critical and distinct roles in secretion and activity. Loss of each conserved cysteine results in high molecular weight oxidized Wnt oligomers, which are formed through inter-Wnt disulfide bonding. Post-translationally, palmitoleoylation is required for efficient binding to frizzled receptors. Depalmitoleoylation leads to Wnt signaling pathway inhibition.

The protein localises to the secreted. The protein resides in the extracellular space. It is found in the extracellular matrix. Its function is as follows. Ligand for members of the frizzled family of seven transmembrane receptors. Functions in the canonical Wnt signaling pathway that results in activation of transcription factors of the TCF/LEF family. Required for normal embryonic mesoderm development and formation of caudal somites. Required for normal morphogenesis of the developing neural tube. The chain is Protein Wnt-3a (WNT3A) from Meleagris gallopavo (Wild turkey).